Consider the following 258-residue polypeptide: Imidazole glycerol phosphate synthase subunit HisF (258 aa).

Active-site residues include D11 and D130.

This sequence belongs to the HisA/HisF family. In terms of assembly, heterodimer of HisH and HisF.

It is found in the cytoplasm. The catalysed reaction is 5-[(5-phospho-1-deoxy-D-ribulos-1-ylimino)methylamino]-1-(5-phospho-beta-D-ribosyl)imidazole-4-carboxamide + L-glutamine = D-erythro-1-(imidazol-4-yl)glycerol 3-phosphate + 5-amino-1-(5-phospho-beta-D-ribosyl)imidazole-4-carboxamide + L-glutamate + H(+). The protein operates within amino-acid biosynthesis; L-histidine biosynthesis; L-histidine from 5-phospho-alpha-D-ribose 1-diphosphate: step 5/9. IGPS catalyzes the conversion of PRFAR and glutamine to IGP, AICAR and glutamate. The HisF subunit catalyzes the cyclization activity that produces IGP and AICAR from PRFAR using the ammonia provided by the HisH subunit. This Roseiflexus sp. (strain RS-1) protein is Imidazole glycerol phosphate synthase subunit HisF.